Consider the following 402-residue polypeptide: Plasminogen activator inhibitor 1 (402 aa).

Positions M1–A23 are cleaved as a signal peptide. N-linked (GlcNAc...) asparagine glycosylation is found at N232, N288, and N352.

It belongs to the serpin family. Forms a heterodimer with TMPRSS7. Interacts with VTN. Binds LRP1B; binding is followed by internalization and degradation. Interacts with PPP1CB. In complex with PLAU/uPA, interacts with PLAUR/uPAR. Interacts with SORL1 and LRP1, either alone or in complex with PLAU; these interactions are abolished in the presence of LRPAP1/RAP. The ternary complex composed of PLAUR-PLAU-PAI1 also interacts with SORL1. Interacts with PLAT/tPA. Also interacts with SORL1, when complexed to PLAT/tPA.

It is found in the secreted. In terms of biological role, serine protease inhibitor. Inhibits TMPRSS7. Is a primary inhibitor of tissue-type plasminogen activator (PLAT) and urokinase-type plasminogen activator (PLAU). As PLAT inhibitor, it is required for fibrinolysis down-regulation and is responsible for the controlled degradation of blood clots. As PLAU inhibitor, it is involved in the regulation of cell adhesion and spreading. Acts as a regulator of cell migration, independently of its role as protease inhibitor. It is required for stimulation of keratinocyte migration during cutaneous injury repair. It is involved in cellular and replicative senescence. Plays a role in alveolar type 2 cells senescence in the lung. Is involved in the regulation of cementogenic differentiation of periodontal ligament stem cells, and regulates odontoblast differentiation and dentin formation during odontogenesis. The polypeptide is Plasminogen activator inhibitor 1 (SERPINE1) (Sus scrofa (Pig)).